We begin with the raw amino-acid sequence, 352 residues long: Thymidine kinase (352 aa).

32–39 (GVYGIGKS) lines the ATP pocket. Glutamate 60 functions as the Proton acceptor in the catalytic mechanism. 4 residues coordinate substrate: tyrosine 78, glutamine 102, phenylalanine 105, and phenylalanine 148. Residue arginine 192 participates in ATP binding. Arginine 198 is a binding site for substrate.

The protein belongs to the herpesviridae thymidine kinase family. As to quaternary structure, homodimer.

The enzyme catalyses thymidine + ATP = dTMP + ADP + H(+). Catalyzes the transfer of the gamma-phospho group of ATP to thymidine to generate dTMP in the salvage pathway of pyrimidine synthesis. The dTMP serves as a substrate for DNA polymerase during viral DNA replication. Allows the virus to be reactivated and to grow in non-proliferative cells lacking a high concentration of phosphorylated nucleic acid precursors. The chain is Thymidine kinase from Equine herpesvirus 4 (strain 1942) (EHV-4).